A 159-amino-acid chain; its full sequence is Dynein 18 kDa light chain, flagellar outer arm (159 aa).

3 consecutive EF-hand domains span residues 18-53, 54-89, and 129-159; these read EEMD…LGQN, PTEE…NKQM, and ELTV…ALLS. Residues Asp-31, Asp-33, Ser-35, Thr-37, Glu-42, Asp-67, Asp-69, Ser-71, Cys-73, and Glu-78 each contribute to the Ca(2+) site.

In terms of assembly, consists of at least 3 heavy chains (alpha, beta and gamma), 2 intermediate chains and 8 light chains.

It is found in the cell projection. The protein resides in the cilium. It localises to the flagellum. Functionally, may be involved in the calcium-mediated regulation of dynein motor function. Binds 1 mole of calcium. The polypeptide is Dynein 18 kDa light chain, flagellar outer arm (Chlamydomonas reinhardtii (Chlamydomonas smithii)).